Reading from the N-terminus, the 117-residue chain is Large ribosomal subunit protein bL19 (117 aa).

Belongs to the bacterial ribosomal protein bL19 family.

This protein is located at the 30S-50S ribosomal subunit interface and may play a role in the structure and function of the aminoacyl-tRNA binding site. The sequence is that of Large ribosomal subunit protein bL19 from Exiguobacterium sp. (strain ATCC BAA-1283 / AT1b).